Consider the following 91-residue polypeptide: Aspartyl/glutamyl-tRNA(Asn/Gln) amidotransferase subunit C (91 aa).

Residues 68–91 (LDQDDALANAPETEDGRFKGPNVS) form a disordered region.

This sequence belongs to the GatC family. Heterotrimer of A, B and C subunits.

It catalyses the reaction L-glutamyl-tRNA(Gln) + L-glutamine + ATP + H2O = L-glutaminyl-tRNA(Gln) + L-glutamate + ADP + phosphate + H(+). The catalysed reaction is L-aspartyl-tRNA(Asn) + L-glutamine + ATP + H2O = L-asparaginyl-tRNA(Asn) + L-glutamate + ADP + phosphate + 2 H(+). In terms of biological role, allows the formation of correctly charged Asn-tRNA(Asn) or Gln-tRNA(Gln) through the transamidation of misacylated Asp-tRNA(Asn) or Glu-tRNA(Gln) in organisms which lack either or both of asparaginyl-tRNA or glutaminyl-tRNA synthetases. The reaction takes place in the presence of glutamine and ATP through an activated phospho-Asp-tRNA(Asn) or phospho-Glu-tRNA(Gln). This Halobacterium salinarum (strain ATCC 29341 / DSM 671 / R1) protein is Aspartyl/glutamyl-tRNA(Asn/Gln) amidotransferase subunit C.